Reading from the N-terminus, the 919-residue chain is Calcium-activated chloride channel regulator 4 (919 aa).

Residues 1 to 21 (MGLFRGFVFLLVLCLLHQSNT) form the signal peptide. The segment at 45–199 (DEKIIEQIED…GISGRNRVYK (155 aa)) is metalloprotease domain. Asn-75 carries N-linked (GlcNAc...) asparagine glycosylation. His-155 serves as a coordination point for Zn(2+). Residue Glu-156 is part of the active site. 2 residues coordinate Zn(2+): His-159 and Asp-166. In terms of domain architecture, VWFA spans 306-476 (IVCLVLDKSG…NGLIDAFGAL (171 aa)). 9 N-linked (GlcNAc...) asparagine glycosylation sites follow: Asn-340, Asn-504, Asn-542, Asn-588, Asn-628, Asn-811, Asn-832, Asn-837, and Asn-852. A disordered region spans residues 870–893 (ANPDDIDPTPTPTPTPTPDKSHNS). A helical transmembrane segment spans residues 895 to 915 (VNISTLVLSVIGSVVIVNFIL).

The protein belongs to the CLCR family. The translation product is autoproteolytically cleaved by the metalloprotease domain in the endoplasmic reticulum into a N-terminal and a C-terminal products that remain physically associated with each other. The cleavage is necessary for calcium-activated chloride channel (CaCC) activation activity. In terms of tissue distribution, primarily expressed in the digestive tract, mainly in colon. Detected in smaller amounts in brain, urogenital organs, testis, and salivary and mammary glands. Highly expressed in the epithelial layer and submucosal gland of the inferior turbinate mucosa. Lower levels in the epithelial layer of nasal polyp.

The protein resides in the cell membrane. It localises to the apical cell membrane. Its subcellular location is the secreted. Functionally, may be involved in mediating calcium-activated chloride conductance. The sequence is that of Calcium-activated chloride channel regulator 4 (CLCA4) from Homo sapiens (Human).